A 269-amino-acid chain; its full sequence is 4-hydroxy-tetrahydrodipicolinate reductase (269 aa).

9 to 14 lines the NAD(+) pocket; that stretch reads GVAGRM. Arg-36 lines the NADP(+) pocket. NAD(+) contacts are provided by residues 99–101 and 123–126; these read GTT and APNM. His-156 functions as the Proton donor/acceptor in the catalytic mechanism. His-157 contacts (S)-2,3,4,5-tetrahydrodipicolinate. Residue Lys-160 is the Proton donor of the active site. (S)-2,3,4,5-tetrahydrodipicolinate is bound at residue 166-167; sequence GT.

This sequence belongs to the DapB family.

Its subcellular location is the cytoplasm. The catalysed reaction is (S)-2,3,4,5-tetrahydrodipicolinate + NAD(+) + H2O = (2S,4S)-4-hydroxy-2,3,4,5-tetrahydrodipicolinate + NADH + H(+). The enzyme catalyses (S)-2,3,4,5-tetrahydrodipicolinate + NADP(+) + H2O = (2S,4S)-4-hydroxy-2,3,4,5-tetrahydrodipicolinate + NADPH + H(+). It functions in the pathway amino-acid biosynthesis; L-lysine biosynthesis via DAP pathway; (S)-tetrahydrodipicolinate from L-aspartate: step 4/4. In terms of biological role, catalyzes the conversion of 4-hydroxy-tetrahydrodipicolinate (HTPA) to tetrahydrodipicolinate. This chain is 4-hydroxy-tetrahydrodipicolinate reductase, found in Methylococcus capsulatus (strain ATCC 33009 / NCIMB 11132 / Bath).